The sequence spans 501 residues: ATP synthase subunit alpha (501 aa).

Gly169–Thr176 lines the ATP pocket.

It belongs to the ATPase alpha/beta chains family. F-type ATPases have 2 components, CF(1) - the catalytic core - and CF(0) - the membrane proton channel. CF(1) has five subunits: alpha(3), beta(3), gamma(1), delta(1), epsilon(1). CF(0) has three main subunits: a(1), b(2) and c(9-12). The alpha and beta chains form an alternating ring which encloses part of the gamma chain. CF(1) is attached to CF(0) by a central stalk formed by the gamma and epsilon chains, while a peripheral stalk is formed by the delta and b chains.

The protein localises to the cell membrane. It carries out the reaction ATP + H2O + 4 H(+)(in) = ADP + phosphate + 5 H(+)(out). Functionally, produces ATP from ADP in the presence of a proton gradient across the membrane. The alpha chain is a regulatory subunit. The sequence is that of ATP synthase subunit alpha from Streptococcus agalactiae serotype III (strain NEM316).